Consider the following 148-residue polypeptide: Large-conductance mechanosensitive channel (148 aa).

2 helical membrane passes run 14 to 34 (VVDMAVGIIIGAAFTTIINTL) and 85 to 105 (GIFVNACISFLIVTFVMFLSV).

This sequence belongs to the MscL family. As to quaternary structure, homopentamer.

The protein localises to the cell inner membrane. Its function is as follows. Channel that opens in response to stretch forces in the membrane lipid bilayer. May participate in the regulation of osmotic pressure changes within the cell. The polypeptide is Large-conductance mechanosensitive channel (Chlorobium phaeobacteroides (strain DSM 266 / SMG 266 / 2430)).